Reading from the N-terminus, the 322-residue chain is Beta-ketoacyl-[acyl-carrier-protein] synthase III (322 aa).

Residues Cys-113 and His-249 contribute to the active site. The segment at 250–254 (QANVR) is ACP-binding. Asn-279 is a catalytic residue.

Belongs to the thiolase-like superfamily. FabH family. In terms of assembly, homodimer.

The protein resides in the cytoplasm. It catalyses the reaction malonyl-[ACP] + acetyl-CoA + H(+) = 3-oxobutanoyl-[ACP] + CO2 + CoA. The protein operates within lipid metabolism; fatty acid biosynthesis. Catalyzes the condensation reaction of fatty acid synthesis by the addition to an acyl acceptor of two carbons from malonyl-ACP. Catalyzes the first condensation reaction which initiates fatty acid synthesis and may therefore play a role in governing the total rate of fatty acid production. Possesses both acetoacetyl-ACP synthase and acetyl transacylase activities. Its substrate specificity determines the biosynthesis of branched-chain and/or straight-chain of fatty acids. The chain is Beta-ketoacyl-[acyl-carrier-protein] synthase III from Anaplasma marginale (strain St. Maries).